Here is a 196-residue protein sequence, read N- to C-terminus: Probable thymidylate kinase (196 aa).

7–14 (GIDGAGKT) is an ATP binding site.

This sequence belongs to the thymidylate kinase family.

It catalyses the reaction dTMP + ATP = dTDP + ADP. The chain is Probable thymidylate kinase (tmk) from Archaeoglobus fulgidus (strain ATCC 49558 / DSM 4304 / JCM 9628 / NBRC 100126 / VC-16).